The sequence spans 654 residues: Pentatricopeptide repeat-containing protein At4g19191, mitochondrial (654 aa).

A mitochondrion-targeting transit peptide spans 1–65 (MSLIHRRLYR…PFVAKACARL (65 aa)). 13 PPR repeats span residues 86 to 116 (DVFV…MPER), 117 to 151 (DATT…EITP), 152 to 186 (DSVT…GVDV), 187 to 217 (QVTV…IDRG), 220 to 254 (TVVS…EFKP), 255 to 289 (DLST…GTDQ), 290 to 320 (DIEA…MTSR), 321 to 355 (TCVS…GEKP), 356 to 390 (DLVT…GCKR), 392 to 422 (NVMI…TPEK), 423 to 457 (TVVT…DYKP), 458 to 488 (NHIT…MKQV), and 494 to 524 (GLDH…MSAK). The segment at 529 to 604 (IWGALLNACK…YPGESVIQVN (76 aa)) is type E motif. The tract at residues 605 to 635 (GKNHSFTVGEHGHVENEVIYFTLNGLSLFAK) is type E(+) motif.

It belongs to the PPR family. PCMP-E subfamily.

The protein localises to the mitochondrion. The protein is Pentatricopeptide repeat-containing protein At4g19191, mitochondrial (PCMP-E1) of Arabidopsis thaliana (Mouse-ear cress).